We begin with the raw amino-acid sequence, 218 residues long: Ohanin-like protein (218 aa).

The first 40 residues, 1–40 (MSPSAGFQFSLYFLQTKKVLWKLTGLCYILLFTLCFFADQ), serve as a signal peptide directing secretion. The propeptide occupies 41 to 48 (ENGGKALA). One can recognise a B30.2/SPRY domain in the interval 49–155 (SPPGIWKRAD…RIWQTGLWWL (107 aa)). The propeptide occupies 156–218 (RHLETDPGRV…LGGTVSLTTL (63 aa)).

The protein belongs to the ohanin/vespryn family. As to expression, expressed by the venom gland.

Its subcellular location is the secreted. Neurotoxin that produces dose-dependent hypolocomotion and hyperalgesia in mice. May directly act on the central nervous system, as it is 6500-fold more potent when administered intracerebroventricularly than intraperitoneal. This Lachesis muta muta (Bushmaster) protein is Ohanin-like protein.